The chain runs to 393 residues: Protein TsgA (393 aa).

The next 12 membrane-spanning stretches (helical) occupy residues 11–31 (WISF…GMVM), 51–71 (FLNA…EIVP), 78–98 (FGFI…SLAL), 101–121 (AAMF…TFLI), 134–154 (LLFT…VAAF), 162–182 (WYWV…LTFG), 206–226 (IGVL…LGFI), 245–265 (ALVS…SFIL), 273–293 (ILTV…TGTQ), 298–318 (WFIL…ITLG), 332–352 (FILT…GPIV), and 361–381 (LLTA…LGFV).

Belongs to the major facilitator superfamily. TsgA family.

The protein localises to the cell inner membrane. The polypeptide is Protein TsgA (Salmonella dublin (strain CT_02021853)).